The primary structure comprises 395 residues: Succinyl-diaminopimelate desuccinylase (395 aa).

Position 74 (histidine 74) interacts with Zn(2+). Aspartate 76 is an active-site residue. Residue aspartate 107 coordinates Zn(2+). Glutamate 141 functions as the Proton acceptor in the catalytic mechanism. 3 residues coordinate Zn(2+): glutamate 142, glutamate 170, and histidine 368.

Belongs to the peptidase M20A family. DapE subfamily. Homodimer. The cofactor is Zn(2+). Co(2+) serves as cofactor.

It catalyses the reaction N-succinyl-(2S,6S)-2,6-diaminopimelate + H2O = (2S,6S)-2,6-diaminopimelate + succinate. The protein operates within amino-acid biosynthesis; L-lysine biosynthesis via DAP pathway; LL-2,6-diaminopimelate from (S)-tetrahydrodipicolinate (succinylase route): step 3/3. In terms of biological role, catalyzes the hydrolysis of N-succinyl-L,L-diaminopimelic acid (SDAP), forming succinate and LL-2,6-diaminopimelate (DAP), an intermediate involved in the bacterial biosynthesis of lysine and meso-diaminopimelic acid, an essential component of bacterial cell walls. In Brucella abortus (strain S19), this protein is Succinyl-diaminopimelate desuccinylase.